Consider the following 147-residue polypeptide: Large ribosomal subunit protein bL9 (147 aa).

The protein belongs to the bacterial ribosomal protein bL9 family.

Functionally, binds to the 23S rRNA. This is Large ribosomal subunit protein bL9 from Halothermothrix orenii (strain H 168 / OCM 544 / DSM 9562).